Here is a 557-residue protein sequence, read N- to C-terminus: CTP synthase (557 aa).

Positions 1 to 270 are amidoligase domain; sequence MTKYVFVTGG…DAIICEELKL (270 aa). Residue Ser13 participates in CTP binding. A UTP-binding site is contributed by Ser13. Residues 14 to 19 and Asp71 each bind ATP; that span reads SLGKGI. Residues Asp71 and Glu144 each contribute to the Mg(2+) site. CTP is bound by residues 151–153, 191–196, and Lys227; these read DIE and KTKPTQ. UTP contacts are provided by residues 191-196 and Lys227; that span reads KTKPTQ. The Glutamine amidotransferase type-1 domain maps to 295–547; the sequence is TIGMVGKYVD…VEAALAHQQS (253 aa). Gly356 provides a ligand contact to L-glutamine. The Nucleophile; for glutamine hydrolysis role is filled by Cys383. Residues 384 to 387, Glu407, and Arg473 each bind L-glutamine; that span reads LGMQ. Active-site residues include His520 and Glu522.

The protein belongs to the CTP synthase family. In terms of assembly, homotetramer.

The catalysed reaction is UTP + L-glutamine + ATP + H2O = CTP + L-glutamate + ADP + phosphate + 2 H(+). The enzyme catalyses L-glutamine + H2O = L-glutamate + NH4(+). It carries out the reaction UTP + NH4(+) + ATP = CTP + ADP + phosphate + 2 H(+). It participates in pyrimidine metabolism; CTP biosynthesis via de novo pathway; CTP from UDP: step 2/2. Allosterically activated by GTP, when glutamine is the substrate; GTP has no effect on the reaction when ammonia is the substrate. The allosteric effector GTP functions by stabilizing the protein conformation that binds the tetrahedral intermediate(s) formed during glutamine hydrolysis. Inhibited by the product CTP, via allosteric rather than competitive inhibition. Catalyzes the ATP-dependent amination of UTP to CTP with either L-glutamine or ammonia as the source of nitrogen. Regulates intracellular CTP levels through interactions with the four ribonucleotide triphosphates. This is CTP synthase from Paraburkholderia xenovorans (strain LB400).